Reading from the N-terminus, the 332-residue chain is Tetraacyldisaccharide 4'-kinase (332 aa).

58–65 (TVGGSGKT) provides a ligand contact to ATP.

Belongs to the LpxK family.

It carries out the reaction a lipid A disaccharide + ATP = a lipid IVA + ADP + H(+). It participates in glycolipid biosynthesis; lipid IV(A) biosynthesis; lipid IV(A) from (3R)-3-hydroxytetradecanoyl-[acyl-carrier-protein] and UDP-N-acetyl-alpha-D-glucosamine: step 6/6. Its function is as follows. Transfers the gamma-phosphate of ATP to the 4'-position of a tetraacyldisaccharide 1-phosphate intermediate (termed DS-1-P) to form tetraacyldisaccharide 1,4'-bis-phosphate (lipid IVA). The chain is Tetraacyldisaccharide 4'-kinase from Shewanella piezotolerans (strain WP3 / JCM 13877).